The primary structure comprises 424 residues: Serine--tRNA ligase (424 aa).

Position 231–233 (231–233 (TAE)) interacts with L-serine. ATP contacts are provided by residues 262-264 (RRE) and V278. E285 contributes to the L-serine binding site. 349–352 (EVSS) contributes to the ATP binding site. S384 contributes to the L-serine binding site.

Belongs to the class-II aminoacyl-tRNA synthetase family. Type-1 seryl-tRNA synthetase subfamily. As to quaternary structure, homodimer. The tRNA molecule binds across the dimer.

The protein localises to the cytoplasm. The catalysed reaction is tRNA(Ser) + L-serine + ATP = L-seryl-tRNA(Ser) + AMP + diphosphate + H(+). It catalyses the reaction tRNA(Sec) + L-serine + ATP = L-seryl-tRNA(Sec) + AMP + diphosphate + H(+). It participates in aminoacyl-tRNA biosynthesis; selenocysteinyl-tRNA(Sec) biosynthesis; L-seryl-tRNA(Sec) from L-serine and tRNA(Sec): step 1/1. Its function is as follows. Catalyzes the attachment of serine to tRNA(Ser). Is also able to aminoacylate tRNA(Sec) with serine, to form the misacylated tRNA L-seryl-tRNA(Sec), which will be further converted into selenocysteinyl-tRNA(Sec). This Chlamydia abortus (strain DSM 27085 / S26/3) (Chlamydophila abortus) protein is Serine--tRNA ligase.